Reading from the N-terminus, the 224-residue chain is Putative ribonuclease Z (224 aa).

Zn(2+)-binding residues include D120 and H184.

This sequence belongs to the RNase Z family. In terms of assembly, homodimer. It depends on Zn(2+) as a cofactor.

It carries out the reaction Endonucleolytic cleavage of RNA, removing extra 3' nucleotides from tRNA precursor, generating 3' termini of tRNAs. A 3'-hydroxy group is left at the tRNA terminus and a 5'-phosphoryl group is left at the trailer molecule.. Its function is as follows. Zinc phosphodiesterase, which displays some tRNA 3'-processing endonuclease activity. Probably involved in tRNA maturation, by removing a 3'-trailer from precursor tRNA. In Mycobacterium tuberculosis (strain CDC 1551 / Oshkosh), this protein is Putative ribonuclease Z (rnz).